Consider the following 224-residue polypeptide: Phosphoglycolate phosphatase (224 aa).

Residue aspartate 8 is the Nucleophile of the active site. Residues aspartate 8 and aspartate 10 each coordinate Mg(2+). Substrate is bound at residue lysine 151. Mg(2+)-binding residues include aspartate 174 and aspartate 178.

Belongs to the archaeal SPP-like hydrolase family. The cofactor is Mg(2+).

The catalysed reaction is 2-phosphoglycolate + H2O = glycolate + phosphate. Its function is as follows. Catalyzes the dephosphorylation of 2-phosphoglycolate. The polypeptide is Phosphoglycolate phosphatase (Thermoplasma volcanium (strain ATCC 51530 / DSM 4299 / JCM 9571 / NBRC 15438 / GSS1)).